A 761-amino-acid chain; its full sequence is Isocyanide synthase xanB (761 aa).

Residues 24–128 (LLGSYETKAP…GKGTKADPSH (105 aa)) form a disordered region. A compositionally biased stretch (low complexity) spans 36–48 (ETSEIAASSSSSE). Over residues 93–102 (TVSTPQSSDN) the composition is skewed to polar residues. Residues 115-126 (FKDEGKGTKADP) are compositionally biased toward basic and acidic residues.

Belongs to the isocyanide synthase family.

Its pathway is secondary metabolite biosynthesis. Its function is as follows. Isocyanide synthase; part of the gene cluster that mediates the biosynthesis of the isocyanide xanthocillin and its derivatives. The first step of the pathway consists in the conversion of tyrosine into a vinyl-isonitrile intermediate by the isocyanide synthase xanB. Subsequent oxidative dimerization of this intermediate to form xanthocillin may involve the cytochrome P450 monooxygenase xanG, whose expression is coregulated with that of XanB. Xanthocillin can be further modified by the isonitrile hydratase-like protein xanA which introduces N-formyl groups and the methyltransferase xanE which introduces methyl groups, leading to the production of several derivatives including fumiformamide. Finally, fumiformamide can be subject to both oxidative and reductive cyclization to yield melanocins E and F, respectively. In Aspergillus fumigatus (strain ATCC MYA-4609 / CBS 101355 / FGSC A1100 / Af293) (Neosartorya fumigata), this protein is Isocyanide synthase xanB.